Reading from the N-terminus, the 396-residue chain is Elongation factor Tu (396 aa).

In terms of domain architecture, tr-type G spans 10-205; the sequence is KPHVNIGTIG…AVDESIPDPV (196 aa). Positions 19–26 are G1; that stretch reads GHVDHGKT. 19-26 is a binding site for GTP; sequence GHVDHGKT. Threonine 26 provides a ligand contact to Mg(2+). A G2 region spans residues 62 to 66; it reads GITIN. A G3 region spans residues 83–86; that stretch reads DAPG. GTP-binding positions include 83–87 and 138–141; these read DAPGH and NKAD. A G4 region spans residues 138 to 141; it reads NKAD. Residues 175 to 177 form a G5 region; that stretch reads SAL.

Belongs to the TRAFAC class translation factor GTPase superfamily. Classic translation factor GTPase family. EF-Tu/EF-1A subfamily. As to quaternary structure, monomer.

The protein resides in the cytoplasm. It catalyses the reaction GTP + H2O = GDP + phosphate + H(+). Its function is as follows. GTP hydrolase that promotes the GTP-dependent binding of aminoacyl-tRNA to the A-site of ribosomes during protein biosynthesis. This Mycolicibacterium vanbaalenii (strain DSM 7251 / JCM 13017 / BCRC 16820 / KCTC 9966 / NRRL B-24157 / PYR-1) (Mycobacterium vanbaalenii) protein is Elongation factor Tu.